The sequence spans 143 residues: Actin-depolymerizing factor 5 (143 aa).

The 133-residue stretch at 11-143 (GMRVTDECTS…GFDIIQDRAK (133 aa)) folds into the ADF-H domain.

This sequence belongs to the actin-binding proteins ADF family. Expressed exclusively in root tip meristem.

The protein resides in the cytoplasm. It localises to the cytoskeleton. Functionally, actin-depolymerizing protein. Severs actin filaments (F-actin) and binds to actin monomers. This Arabidopsis thaliana (Mouse-ear cress) protein is Actin-depolymerizing factor 5 (ADF5).